The chain runs to 98 residues: uncharacterized protein (98 aa).

The disordered stretch occupies residues 53–98 (AALEGGRHRHRGESASGNGIQHGVPPNVALIPSGSTLLTPARSGHV).

This is an uncharacterized protein from Mycolicibacterium smegmatis (strain ATCC 700084 / mc(2)155) (Mycobacterium smegmatis).